Reading from the N-terminus, the 796-residue chain is Protein tyrosine phosphatase domain-containing protein 1 (796 aa).

One can recognise a Tyrosine-protein phosphatase domain in the interval 126 to 297 (YSSWVTDNIL…LIPLRNIFSC (172 aa)). C234 functions as the Phosphocysteine intermediate in the catalytic mechanism. Phosphoserine is present on residues S435 and S437.

The protein belongs to the protein-tyrosine phosphatase family. Non-receptor class PTPDC1 subfamily.

May play roles in cilia formation and/or maintenance. The sequence is that of Protein tyrosine phosphatase domain-containing protein 1 (PTPDC1) from Bos taurus (Bovine).